A 312-amino-acid polypeptide reads, in one-letter code: Polyhedral envelope protein (312 aa).

The protein belongs to the baculoviridae PE family.

It localises to the virion membrane. Functionally, major component of the polyhedra envelope. The polypeptide is Polyhedral envelope protein (Lymantria dispar multicapsid nuclear polyhedrosis virus (LdMNPV)).